Consider the following 363-residue polypeptide: Ribosomal RNA large subunit methyltransferase M (363 aa).

S-adenosyl-L-methionine contacts are provided by residues Ser-190, 223-226 (CPGG), Asp-242, Asp-262, and Asp-280. Lys-309 (proton acceptor) is an active-site residue.

This sequence belongs to the class I-like SAM-binding methyltransferase superfamily. RNA methyltransferase RlmE family. RlmM subfamily. In terms of assembly, monomer.

It is found in the cytoplasm. The enzyme catalyses cytidine(2498) in 23S rRNA + S-adenosyl-L-methionine = 2'-O-methylcytidine(2498) in 23S rRNA + S-adenosyl-L-homocysteine + H(+). In terms of biological role, catalyzes the 2'-O-methylation at nucleotide C2498 in 23S rRNA. The protein is Ribosomal RNA large subunit methyltransferase M of Actinobacillus pleuropneumoniae serotype 5b (strain L20).